The primary structure comprises 361 residues: Phospho-N-acetylmuramoyl-pentapeptide-transferase (361 aa).

Transmembrane regions (helical) follow at residues 21 to 41 (YITF…FVIG), 72 to 92 (TPTM…LLWV), 94 to 114 (LANV…LIGF), 135 to 155 (LAWT…VTPH), 169 to 189 (LLVN…VGAS), 200 to 220 (GLAI…AYLS), 240 to 260 (LAVF…FNAP), 263 to 283 (MVFM…AVSV), 289 to 309 (LVLA…MVQV), and 338 to 358 (TVVI…LSTL).

The protein belongs to the glycosyltransferase 4 family. MraY subfamily. Requires Mg(2+) as cofactor.

It is found in the cell inner membrane. The catalysed reaction is UDP-N-acetyl-alpha-D-muramoyl-L-alanyl-gamma-D-glutamyl-meso-2,6-diaminopimeloyl-D-alanyl-D-alanine + di-trans,octa-cis-undecaprenyl phosphate = di-trans,octa-cis-undecaprenyl diphospho-N-acetyl-alpha-D-muramoyl-L-alanyl-D-glutamyl-meso-2,6-diaminopimeloyl-D-alanyl-D-alanine + UMP. It functions in the pathway cell wall biogenesis; peptidoglycan biosynthesis. Its function is as follows. Catalyzes the initial step of the lipid cycle reactions in the biosynthesis of the cell wall peptidoglycan: transfers peptidoglycan precursor phospho-MurNAc-pentapeptide from UDP-MurNAc-pentapeptide onto the lipid carrier undecaprenyl phosphate, yielding undecaprenyl-pyrophosphoryl-MurNAc-pentapeptide, known as lipid I. The chain is Phospho-N-acetylmuramoyl-pentapeptide-transferase from Rhodospirillum centenum (strain ATCC 51521 / SW).